We begin with the raw amino-acid sequence, 405 residues long: Dematin (405 aa).

Disordered regions lie at residues 1-30 (MERL…PSSI), 79-158 (PRSR…GSPQ), 173-192 (FPAA…TDYW), and 203-332 (TEWR…DRGN). The span at 11 to 29 (SPGSVSPSRDSSVPGSPSS) shows a compositional bias: low complexity. 9 positions are modified to phosphoserine: serine 16, serine 18, serine 26, serine 92, serine 96, serine 105, serine 110, serine 113, and serine 156. Positions 108–123 (IISQASAPRTTGTPRT) are enriched in polar residues. Residues 216–227 (EEEEEEEDDDSG) show a composition bias toward acidic residues. The interaction with RASGRF2 stretch occupies residues 224–308 (DDSGEEMKAL…SRLQSTEFSP (85 aa)). Serine 226 carries the post-translational modification Phosphoserine. Basic and acidic residues-rich tracts occupy residues 228–242 (EEMK…EELS) and 252–261 (ILKEEMEKSL). Phosphoserine occurs at positions 269, 279, 289, 303, 315, 333, 372, and 383. The segment covering 276-322 (FHTSLHQGTSKSSSLPAYGRTTLSRLQSTEFSPSGSETGSPGLQNGE) has biased composition (polar residues). The 69-residue stretch at 337–405 (VLEQKIYPYE…NELKKKASLF (69 aa)) folds into the HP domain. A Phosphoserine; by PKA modification is found at serine 403.

Belongs to the villin/gelsolin family. As to quaternary structure, monomeric (isoform 2); under reducing conditions. Self-associates. Exists under oxidizing condition as a trimer of two isoforms 2 and isoform 1 linked by disulfide bonds. Found in a complex with DMTN, F-actin and spectrin. Found in a complex with ADD2, DMTN and SLC2A1. Interacts with F-actin, ITPKB, RASGRF2 and spectrin. Isoform 2 interacts with SLC2A1 (via C-terminus cytoplasmic region). Isoform 1 and isoform 2 interact (phosphorylated form) with plasmodium berghei 14-3-3 protein; the interaction occurs in a PKA-dependent manner. Post-translationally, phosphorylated. Phosphorylation at Ser-403 by PKA causes the C-terminal headpiece domain to associate with the N-terminal core domain, and leads to the inhibition of its actin bundling activity. In terms of processing, the N-terminus is blocked. In terms of tissue distribution, expressed in platelets (at protein level). Expressed in heart, brain, lung, skeletal muscle, and kidney.

Its subcellular location is the cytoplasm. It is found in the cytosol. The protein resides in the perinuclear region. The protein localises to the cytoskeleton. It localises to the cell membrane. Its subcellular location is the membrane. It is found in the endomembrane system. The protein resides in the cell projection. Its function is as follows. Membrane-cytoskeleton-associated protein with F-actin-binding activity that induces F-actin bundles formation and stabilization. Its F-actin-bundling activity is reversibly regulated upon its phosphorylation by the cAMP-dependent protein kinase A (PKA). Binds to the erythrocyte membrane glucose transporter-1 SLC2A1/GLUT1, and hence stabilizes and attaches the spectrin-actin network to the erythrocytic plasma membrane. Plays a role in maintaining the functional integrity of PKA-activated erythrocyte shape and the membrane mechanical properties. Also plays a role as a modulator of actin dynamics in fibroblasts; acts as a negative regulator of the RhoA activation pathway. In platelets, functions as a regulator of internal calcium mobilization across the dense tubular system that affects platelet granule secretion pathways and aggregation. Also required for the formation of a diverse set of cell protrusions, such as filopodia and lamellipodia, necessary for platelet cell spreading, motility and migration. Acts as a tumor suppressor and inhibits malignant cell transformation. The chain is Dematin (DMTN) from Homo sapiens (Human).